Here is a 501-residue protein sequence, read N- to C-terminus: Glycerol kinase (501 aa).

Position 12 (T12) interacts with ADP. ATP-binding residues include T12, T13, and S14. A sn-glycerol 3-phosphate-binding site is contributed by T12. ADP is bound at residue R16. Residues R82, E83, Y135, and D244 each contribute to the sn-glycerol 3-phosphate site. Positions 82, 83, 135, 244, and 245 each coordinate glycerol. Residues T266, G309, G409, and N413 each coordinate ADP. ATP contacts are provided by T266, G309, and G409.

The protein belongs to the FGGY kinase family.

It carries out the reaction glycerol + ATP = sn-glycerol 3-phosphate + ADP + H(+). It functions in the pathway polyol metabolism; glycerol degradation via glycerol kinase pathway; sn-glycerol 3-phosphate from glycerol: step 1/1. Its activity is regulated as follows. Inhibited by fructose 1,6-bisphosphate (FBP). Functionally, key enzyme in the regulation of glycerol uptake and metabolism. Catalyzes the phosphorylation of glycerol to yield sn-glycerol 3-phosphate. This Coxiella burnetii (strain Dugway 5J108-111) protein is Glycerol kinase.